The primary structure comprises 129 residues: Lysozyme C-1 (129 aa).

The 129-residue stretch at 1–129 (KVFERCELAR…VSSYVEGCTL (129 aa)) folds into the C-type lysozyme domain. Cystine bridges form between C6/C127, C30/C115, C65/C81, and C77/C95. Active-site residues include E35 and D53.

It belongs to the glycosyl hydrolase 22 family. As to quaternary structure, monomer.

The enzyme catalyses Hydrolysis of (1-&gt;4)-beta-linkages between N-acetylmuramic acid and N-acetyl-D-glucosamine residues in a peptidoglycan and between N-acetyl-D-glucosamine residues in chitodextrins.. Functionally, lysozymes have primarily a bacteriolytic function; those in tissues and body fluids are associated with the monocyte-macrophage system and enhance the activity of immunoagents. The chain is Lysozyme C-1 from Capra hircus (Goat).